Reading from the N-terminus, the 107-residue chain is Thioredoxin 1 (107 aa).

The Thioredoxin domain maps to 2 to 107; sequence SAAAQVTDST…TLSQTLEKHL (106 aa). A disulfide bridge connects residues C32 and C35.

The protein belongs to the thioredoxin family.

In terms of biological role, participates in various redox reactions through the reversible oxidation of its active center dithiol to a disulfide and catalyzes dithiol-disulfide exchange reactions. This Nostoc sp. (strain PCC 7120 / SAG 25.82 / UTEX 2576) protein is Thioredoxin 1 (trxA).